We begin with the raw amino-acid sequence, 79 residues long: Small ribosomal subunit protein bS18 (79 aa).

The protein belongs to the bacterial ribosomal protein bS18 family. As to quaternary structure, part of the 30S ribosomal subunit. Forms a tight heterodimer with protein bS6.

In terms of biological role, binds as a heterodimer with protein bS6 to the central domain of the 16S rRNA, where it helps stabilize the platform of the 30S subunit. The polypeptide is Small ribosomal subunit protein bS18 (Latilactobacillus sakei subsp. sakei (strain 23K) (Lactobacillus sakei subsp. sakei)).